Consider the following 106-residue polypeptide: PTS system N,N'-diacetylchitobiose-specific EIIB component (106 aa).

Residues 3 to 106 (KKHIYLFCSA…VAAIKKAAAN (104 aa)) form the PTS EIIB type-3 domain. The active-site Phosphocysteine intermediate is Cys-10. A Phosphocysteine; by EIIA modification is found at Cys-10.

As to quaternary structure, forms a complex with ChbA (EIIA). ChbB is a monomer in both its unphosphorylated and phosphorylated forms.

The protein resides in the cytoplasm. The enzyme catalyses N,N'-diacetylchitobiose(out) + N(pros)-phospho-L-histidyl-[protein] = diacetylchitobiose-6'-phosphate(in) + L-histidyl-[protein]. In terms of biological role, the phosphoenolpyruvate-dependent sugar phosphotransferase system (sugar PTS), a major carbohydrate active transport system, catalyzes the phosphorylation of incoming sugar substrates concomitantly with their translocation across the cell membrane. The enzyme II ChbABC PTS system is involved in the transport of the chitin disaccharide N,N'-diacetylchitobiose (GlcNAc2). The chain is PTS system N,N'-diacetylchitobiose-specific EIIB component (chbB) from Escherichia coli O157:H7.